Consider the following 215-residue polypeptide: Octanoyltransferase (215 aa).

Positions P31–E206 constitute a BPL/LPL catalytic domain. Substrate contacts are provided by residues R70–H77, S137–G139, and G150–A152. The Acyl-thioester intermediate role is filled by C168.

Belongs to the LipB family.

The protein resides in the cytoplasm. It carries out the reaction octanoyl-[ACP] + L-lysyl-[protein] = N(6)-octanoyl-L-lysyl-[protein] + holo-[ACP] + H(+). It participates in protein modification; protein lipoylation via endogenous pathway; protein N(6)-(lipoyl)lysine from octanoyl-[acyl-carrier-protein]: step 1/2. Its function is as follows. Catalyzes the transfer of endogenously produced octanoic acid from octanoyl-acyl-carrier-protein onto the lipoyl domains of lipoate-dependent enzymes. Lipoyl-ACP can also act as a substrate although octanoyl-ACP is likely to be the physiological substrate. This Pseudomonas putida (strain ATCC 700007 / DSM 6899 / JCM 31910 / BCRC 17059 / LMG 24140 / F1) protein is Octanoyltransferase.